The primary structure comprises 53 residues: UPF0391 membrane protein ESA_03375 (53 aa).

Transmembrane regions (helical) follow at residues 4 to 24 (WGII…GGLA) and 28 to 48 (AGAA…SLFM).

The protein belongs to the UPF0391 family.

It localises to the cell membrane. The sequence is that of UPF0391 membrane protein ESA_03375 from Cronobacter sakazakii (strain ATCC BAA-894) (Enterobacter sakazakii).